A 445-amino-acid chain; its full sequence is GTPase Der (445 aa).

EngA-type G domains are found at residues 3–167 and 180–353; these read PVIA…YAGQ and IKIA…AAAM. Residues 9-16, 56-60, 119-122, 186-193, 233-237, and 298-301 each bind GTP; these read GRPNVGKS, DTGGF, NKAE, DTAGL, and NKWD. The region spanning 354-438 is the KH-like domain; the sequence is AKLPTPKLTR…PLRIEFRSSN (85 aa).

This sequence belongs to the TRAFAC class TrmE-Era-EngA-EngB-Septin-like GTPase superfamily. EngA (Der) GTPase family. As to quaternary structure, associates with the 50S ribosomal subunit.

Its function is as follows. GTPase that plays an essential role in the late steps of ribosome biogenesis. The chain is GTPase Der from Burkholderia cenocepacia (strain HI2424).